The sequence spans 546 residues: DDB1- and CUL4-associated factor 11 (546 aa).

The span at 1 to 10 (MGSRNSSSAG) shows a compositional bias: polar residues. Residues 1–40 (MGSRNSSSAGTGSGDPSEGLPRRGAGLRRSEEEEEEDEDV) are disordered. Residues S73 and S75 each carry the phosphoserine modification. The tract at residues 79 to 100 (HDSAWDGRLGDRYNPPVDATPD) is disordered. The segment covering 80-89 (DSAWDGRLGD) has biased composition (basic and acidic residues). WD repeat units lie at residues 170–210 (TYSQ…RKFK), 216–258 (DVGW…TALD), 263–302 (ERRFAVFSIAVSSDGREVLGGANDGCLYVFDREQNRRTLQ), 305–345 (SHED…EDDP), 353–392 (GHQDGITFIDSKGDARYLISNSKDQTIKLWDIRRFSSREG), 435–480 (GVLH…KKLT), and 481–520 (THKACVRDVSWHPFEEKIVSSSWDGNLRLWQYRQAEYFQD). Residues 521–546 (DMPESEEHPSTPAPMSHPSTAFSSPQ) are disordered. Positions 537–546 (HPSTAFSSPQ) are enriched in polar residues.

In terms of assembly, interacts with DDB1 and CUL4A.

Its pathway is protein modification; protein ubiquitination. Its function is as follows. May function as a substrate receptor for CUL4-DDB1 E3 ubiquitin-protein ligase complex. The sequence is that of DDB1- and CUL4-associated factor 11 (DCAF11) from Bos taurus (Bovine).